The sequence spans 159 residues: Phosphopantetheine adenylyltransferase (159 aa).

Residue Thr-10 participates in substrate binding. Residues 10–11 (TF) and His-18 contribute to the ATP site. Lys-42, Leu-74, and Arg-88 together coordinate substrate. ATP is bound by residues 89-91 (GMR), Glu-99, and 124-130 (WSYVSST).

The protein belongs to the bacterial CoaD family. Homohexamer. Mg(2+) is required as a cofactor.

Its subcellular location is the cytoplasm. It carries out the reaction (R)-4'-phosphopantetheine + ATP + H(+) = 3'-dephospho-CoA + diphosphate. It functions in the pathway cofactor biosynthesis; coenzyme A biosynthesis; CoA from (R)-pantothenate: step 4/5. Reversibly transfers an adenylyl group from ATP to 4'-phosphopantetheine, yielding dephospho-CoA (dPCoA) and pyrophosphate. The protein is Phosphopantetheine adenylyltransferase of Mannheimia succiniciproducens (strain KCTC 0769BP / MBEL55E).